The primary structure comprises 616 residues: Dihydroxy-acid dehydratase (616 aa).

Position 81 (D81) interacts with Mg(2+). A [2Fe-2S] cluster-binding site is contributed by C122. 2 residues coordinate Mg(2+): D123 and K124. Position 124 is an N6-carboxylysine (K124). A [2Fe-2S] cluster-binding site is contributed by C195. E491 contacts Mg(2+). S517 serves as the catalytic Proton acceptor.

It belongs to the IlvD/Edd family. Homodimer. [2Fe-2S] cluster serves as cofactor. It depends on Mg(2+) as a cofactor.

It catalyses the reaction (2R)-2,3-dihydroxy-3-methylbutanoate = 3-methyl-2-oxobutanoate + H2O. It carries out the reaction (2R,3R)-2,3-dihydroxy-3-methylpentanoate = (S)-3-methyl-2-oxopentanoate + H2O. It functions in the pathway amino-acid biosynthesis; L-isoleucine biosynthesis; L-isoleucine from 2-oxobutanoate: step 3/4. The protein operates within amino-acid biosynthesis; L-valine biosynthesis; L-valine from pyruvate: step 3/4. In terms of biological role, functions in the biosynthesis of branched-chain amino acids. Catalyzes the dehydration of (2R,3R)-2,3-dihydroxy-3-methylpentanoate (2,3-dihydroxy-3-methylvalerate) into 2-oxo-3-methylpentanoate (2-oxo-3-methylvalerate) and of (2R)-2,3-dihydroxy-3-methylbutanoate (2,3-dihydroxyisovalerate) into 2-oxo-3-methylbutanoate (2-oxoisovalerate), the penultimate precursor to L-isoleucine and L-valine, respectively. This chain is Dihydroxy-acid dehydratase, found in Salmonella heidelberg (strain SL476).